An 867-amino-acid polypeptide reads, in one-letter code: Translation initiation factor IF-2 (867 aa).

The 168-residue stretch at 367-534 (TRAPVVTIMG…AILLQSEILE (168 aa)) folds into the tr-type G domain. Residues 376 to 383 (GHVDHGKT) form a G1 region. 376 to 383 (GHVDHGKT) contacts GTP. Residues 401–405 (GITQN) form a G2 region. Positions 422-425 (DTPG) are G3. GTP contacts are provided by residues 422 to 426 (DTPGH) and 476 to 479 (NKID). Residues 476–479 (NKID) are G4. The segment at 512 to 514 (SAK) is G5.

This sequence belongs to the TRAFAC class translation factor GTPase superfamily. Classic translation factor GTPase family. IF-2 subfamily.

It localises to the cytoplasm. Functionally, one of the essential components for the initiation of protein synthesis. Protects formylmethionyl-tRNA from spontaneous hydrolysis and promotes its binding to the 30S ribosomal subunits. Also involved in the hydrolysis of GTP during the formation of the 70S ribosomal complex. The protein is Translation initiation factor IF-2 of Buchnera aphidicola subsp. Schizaphis graminum (strain Sg).